Reading from the N-terminus, the 422-residue chain is MAKKIQAIRGMNDCLPTQSPLWQKLENAVKSTVSAYGYNEVRMPIVEETNLFSRAVGEETDVVSKEMYTFDDRNGDSLTLRPEGTAGCVRACIQNSLINRDEQRLWYMGPMFRHERPQKGRYRQFHQCGVEVFGLNGPDVDAELIMMTARLWRELGINEHVRLELNSIGSQEDRADYRTALVAFLEQHIDVLDEDCKRRMHTNPLRVLDTKNPEVQAILGDAPRLSEYLGEESKAHFAGLCELLDAAGIEYTVNERLVRGLDYYNRTVFEWITESLGAQGTVCGGGRYDGLVEQLGGSATPAVGFAMGLERLVLMLETLELTDVRRSVDVYVVTAGEGTMMVGMKLAEQLREAIPGVRVMSHFGGGNFKKQFKRADKVGAVVALVLGENEVAENTVVLKDLVGGEQETYNQAEVAEKIAALI.

The protein belongs to the class-II aminoacyl-tRNA synthetase family. Homodimer.

It localises to the cytoplasm. The catalysed reaction is tRNA(His) + L-histidine + ATP = L-histidyl-tRNA(His) + AMP + diphosphate + H(+). The polypeptide is Histidine--tRNA ligase (Vibrio campbellii (strain ATCC BAA-1116)).